A 239-amino-acid chain; its full sequence is MTVEAFISALNDAGITLTEQQIEQFQRYFELLVEANKQFNLTAITDEKDVYLKHFYDSLTVAIYVKALQHQSSTLIDVGTGAGFPSLPLKIAFPQLKITMVDALQKRVRFLQDVVDTLDLKNVSIVHGRAEDIGQNVAYREQFDFATARALARTSVLAEYTLPFVKVGGALLVMKGAAAEQELADGQQALATLGGTLSSAFDFKLPNGDQRVIQVVDKHKKTPKKYPRQAGTPNKKPIA.

S-adenosyl-L-methionine-binding positions include Gly79, Phe84, 130-131 (AE), and Arg149. The segment covering 218–227 (KHKKTPKKYP) has biased composition (basic residues). The segment at 218–239 (KHKKTPKKYPRQAGTPNKKPIA) is disordered.

It belongs to the methyltransferase superfamily. RNA methyltransferase RsmG family.

The protein localises to the cytoplasm. Its function is as follows. Specifically methylates the N7 position of a guanine in 16S rRNA. The protein is Ribosomal RNA small subunit methyltransferase G of Leuconostoc citreum (strain KM20).